Consider the following 330-residue polypeptide: Protein RecA (330 aa).

Residue 66 to 73 (GPESSGKT) participates in ATP binding.

The protein belongs to the RecA family.

It is found in the cytoplasm. Its function is as follows. Can catalyze the hydrolysis of ATP in the presence of single-stranded DNA, the ATP-dependent uptake of single-stranded DNA by duplex DNA, and the ATP-dependent hybridization of homologous single-stranded DNAs. It interacts with LexA causing its activation and leading to its autocatalytic cleavage. This Bacteroides thetaiotaomicron (strain ATCC 29148 / DSM 2079 / JCM 5827 / CCUG 10774 / NCTC 10582 / VPI-5482 / E50) protein is Protein RecA.